The chain runs to 413 residues: Putative competence-damage inducible protein (413 aa).

It belongs to the CinA family.

The sequence is that of Putative competence-damage inducible protein from Lacticaseibacillus paracasei (strain ATCC 334 / BCRC 17002 / CCUG 31169 / CIP 107868 / KCTC 3260 / NRRL B-441) (Lactobacillus paracasei).